Reading from the N-terminus, the 103-residue chain is Small ribosomal subunit protein uS10 (103 aa).

The protein belongs to the universal ribosomal protein uS10 family. In terms of assembly, part of the 30S ribosomal subunit.

In terms of biological role, involved in the binding of tRNA to the ribosomes. This Pseudoalteromonas translucida (strain TAC 125) protein is Small ribosomal subunit protein uS10.